Consider the following 451-residue polypeptide: Trigger factor (451 aa).

The region spanning 163–248 (GDIIDMEYTV…IKALYANILP (86 aa)) is the PPIase FKBP-type domain.

Belongs to the FKBP-type PPIase family. Tig subfamily.

It localises to the cytoplasm. It carries out the reaction [protein]-peptidylproline (omega=180) = [protein]-peptidylproline (omega=0). Involved in protein export. Acts as a chaperone by maintaining the newly synthesized protein in an open conformation. Functions as a peptidyl-prolyl cis-trans isomerase. The polypeptide is Trigger factor (Leptospira interrogans serogroup Icterohaemorrhagiae serovar copenhageni (strain Fiocruz L1-130)).